The sequence spans 84 residues: Dolichol phosphate-mannose biosynthesis regulatory protein (84 aa).

Helical transmembrane passes span 11-31 (LGLVALSLIIFTYYTAWVILL) and 49-69 (YAIAIPLAAGHLLLLFVGIFI).

Belongs to the DPM2 family. As to quaternary structure, component of the dolichol-phosphate mannose (DPM) synthase complex composed of DPM1, DPM2 and DPM3; in the complex interacts directly with DPM3. Component of the glycosylphosphatidylinositol-N-acetylglucosaminyltransferase (GPI-GnT) complex composed at least by PIGA, PIGC, PIGH, PIGP, PIGQ, PIGY and DPM2. Interacts with PIGA, PIGC and PIGQ.

Its subcellular location is the endoplasmic reticulum membrane. Its pathway is protein modification; protein glycosylation. Functionally, regulates the biosynthesis of dolichol phosphate-mannose. Regulatory subunit of the dolichol-phosphate mannose (DPM) synthase complex; essential for the ER localization and stable expression of DPM1. Part of the glycosylphosphatidylinositol-N-acetylglucosaminyltransferase (GPI-GnT) complex that catalyzes the transfer of N-acetylglucosamine from UDP-N-acetylglucosamine to phosphatidylinositol and participates in the first step of GPI biosynthesis. May act by regulating the GPI-GNT complex. The protein is Dolichol phosphate-mannose biosynthesis regulatory protein of Bos taurus (Bovine).